A 376-amino-acid chain; its full sequence is Erythronate-4-phosphate dehydrogenase (376 aa).

Substrate is bound by residues Ser45 and Thr67. NAD(+) is bound at residue Asp147. Arg209 is an active-site residue. An NAD(+)-binding site is contributed by Asp233. Glu238 is an active-site residue. The active-site Proton donor is His255. An NAD(+)-binding site is contributed by Gly258. Residue Tyr259 coordinates substrate.

This sequence belongs to the D-isomer specific 2-hydroxyacid dehydrogenase family. PdxB subfamily. Homodimer.

The protein localises to the cytoplasm. The catalysed reaction is 4-phospho-D-erythronate + NAD(+) = (R)-3-hydroxy-2-oxo-4-phosphooxybutanoate + NADH + H(+). It participates in cofactor biosynthesis; pyridoxine 5'-phosphate biosynthesis; pyridoxine 5'-phosphate from D-erythrose 4-phosphate: step 2/5. In terms of biological role, catalyzes the oxidation of erythronate-4-phosphate to 3-hydroxy-2-oxo-4-phosphonooxybutanoate. This is Erythronate-4-phosphate dehydrogenase from Shewanella loihica (strain ATCC BAA-1088 / PV-4).